Here is a 61-residue protein sequence, read N- to C-terminus: Ubiquinol-cytochrome c reductase complex assembly factor 6 (61 aa).

Residues 1 to 9 (MPAGVSWGQ) lie on the Mitochondrial matrix side of the membrane. A helical transmembrane segment spans residues 10 to 32 (YLKFLGCALASMMAGSQAVHLYY). Residues 33–61 (KPLEDLRVYIEQEQHSTQVDPTAKPPESA) lie on the Mitochondrial intermembrane side of the membrane.

This sequence belongs to the UQCC6 family. In terms of assembly, interacts with sloth1; the interaction stabilizes both components. Expressed in the brain.

It is found in the mitochondrion inner membrane. The protein localises to the mitochondrion. In terms of biological role, required for the assembly and stability of the mitochondrial ubiquinol-cytochrome c reductase complex (complex III (CIII) or cytochrome b-c1 complex), a multisubunit transmembrane complex that is part of the mitochondrial electron transport chain (ETC) which drives oxidative phosphorylation. This chain is Ubiquinol-cytochrome c reductase complex assembly factor 6, found in Drosophila melanogaster (Fruit fly).